The sequence spans 420 residues: Glucose-1-phosphate adenylyltransferase (420 aa).

Alpha-D-glucose 1-phosphate contacts are provided by residues tyrosine 107, glycine 172, 187–188, and serine 205; that span reads EK.

It belongs to the bacterial/plant glucose-1-phosphate adenylyltransferase family. In terms of assembly, homotetramer.

It catalyses the reaction alpha-D-glucose 1-phosphate + ATP + H(+) = ADP-alpha-D-glucose + diphosphate. Its pathway is glycan biosynthesis; glycogen biosynthesis. Its function is as follows. Involved in the biosynthesis of ADP-glucose, a building block required for the elongation reactions to produce glycogen. Catalyzes the reaction between ATP and alpha-D-glucose 1-phosphate (G1P) to produce pyrophosphate and ADP-Glc. The polypeptide is Glucose-1-phosphate adenylyltransferase (Rhodopseudomonas palustris (strain HaA2)).